Consider the following 356-residue polypeptide: Glutamine synthetase nodule isozyme (356 aa).

In terms of domain architecture, GS beta-grasp spans 19-99; sequence IIAEYIWVGG…VICDVYTPAG (81 aa). One can recognise a GS catalytic domain in the interval 106-356; the sequence is KRHNAAKIFS…IAETTLLWKP (251 aa).

This sequence belongs to the glutamine synthetase family. As to quaternary structure, homooctamer. As to expression, found at highest levels in root nodules.

It localises to the cytoplasm. It carries out the reaction L-glutamate + NH4(+) + ATP = L-glutamine + ADP + phosphate + H(+). The polypeptide is Glutamine synthetase nodule isozyme (GS1) (Medicago sativa (Alfalfa)).